Consider the following 135-residue polypeptide: C-type lectin BPL (135 aa).

Cystine bridges form between cysteine 3-cysteine 14, cysteine 31-cysteine 131, cysteine 38-cysteine 133, and cysteine 106-cysteine 123. The 123-residue stretch at 10–132 folds into the C-type lectin domain; that stretch reads MNGLCYKIFN…CESKNAFLCQ (123 aa). Ca(2+) contacts are provided by glutamine 96, aspartate 98, glutamate 104, and aspartate 120. The Galactose-binding motif lies at 96–98; the sequence is QPD.

It belongs to the true venom lectin family. Homodimer; disulfide-linked. Expressed by the venom gland.

The protein resides in the secreted. Its function is as follows. Galactose-binding protein which recognizes specific carbohydrate structures and agglutinates a variety of animal cells by binding to cell-surface glycoproteins and glycolipids. Calcium-dependent lectin. Shows high hemagglutinating activity in the presence of human erythrocytes, which are agglutinated with a minimum hemagglutination concentration (MHC) of 2.5-0.35 ug/ml. Causes indirect nephrotoxicity. Causes reductions in perfusion pressures, renal vascular resistance, urinary flow, glomerular filtration rate, sodium, potassium and chloride tubular transport. Its effects may be caused by the release of inflammatory mediators. The chain is C-type lectin BPL from Bothrops pirajai (Piraja's lancehead).